The following is a 140-amino-acid chain: Large ribosomal subunit protein uL24 (140 aa).

Belongs to the universal ribosomal protein uL24 family. Part of the 50S ribosomal subunit.

Functionally, one of two assembly initiator proteins, it binds directly to the 5'-end of the 23S rRNA, where it nucleates assembly of the 50S subunit. In terms of biological role, located at the polypeptide exit tunnel on the outside of the subunit. The protein is Large ribosomal subunit protein uL24 of Nanoarchaeum equitans (strain Kin4-M).